The sequence spans 230 residues: 8-demethylnovobiocic acid C(8)-methyltransferase (230 aa).

This sequence belongs to the methyltransferase superfamily.

The catalysed reaction is 8-desmethylnovobiocic acid + S-adenosyl-L-methionine = novobiocic acid + S-adenosyl-L-homocysteine + H(+). Its pathway is antibiotic biosynthesis; novobiocin biosynthesis. In terms of biological role, C-methyltransferase that methylates 8-demethylnovobiocic acid to produce novobiocic acid in the novobiocin biosynthesis pathway. Novobiocin is an aminocoumarin family antibiotic that targets bacterial DNA gyrases. This chain is 8-demethylnovobiocic acid C(8)-methyltransferase (novO), found in Streptomyces niveus (Streptomyces spheroides).